The primary structure comprises 273 residues: CUE domain-containing protein 2-A (273 aa).

Residues Gly92–Glu121 are disordered. The CUE domain occupies Asp135–Val178.

This sequence belongs to the CUEDC2 family. In terms of processing, phosphorylated.

It is found in the cytoplasm. Its subcellular location is the nucleus. Its function is as follows. May play a role in targeting proteins for ubiquitination and subsequent proteasomal degradation. This is CUE domain-containing protein 2-A (cuedc2-a) from Xenopus laevis (African clawed frog).